The following is a 499-amino-acid chain: Endoglucanase (499 aa).

Positions 1–29 (MKRSISIFITCLLITLLTMGGMLASPASA) are cleaved as a signal peptide. Substrate is bound by residues H65, 69 to 70 (WY), Y96, and H131. Catalysis depends on E169, which acts as the Proton donor. Residue Y231 coordinates substrate. The Nucleophile role is filled by E257. Substrate-binding positions include 263 to 264 (AS), W291, and 296 to 298 (KQE). The CBM3 domain maps to 350 to 499 (QENGISVQYR…GKLIWGTEPN (150 aa)).

Belongs to the glycosyl hydrolase 5 (cellulase A) family.

It catalyses the reaction Endohydrolysis of (1-&gt;4)-beta-D-glucosidic linkages in cellulose, lichenin and cereal beta-D-glucans.. This is Endoglucanase (bglC) from Bacillus subtilis.